The primary structure comprises 538 residues: Growth factor receptor-bound protein 14 (538 aa).

The disordered stretch occupies residues 1 to 20; it reads MTTSLQDGQSAAGRAGAQDS. At T2 the chain carries N-acetylthreonine. The region spanning 104-190 is the Ras-associating domain; it reads KKQVIKVYSE…NKLYLRKNYA (87 aa). The PH domain occupies 232–340; the sequence is YPEIHGFLHA…WVTAIRLLKD (109 aa). Phosphoserine is present on residues S370 and S373. Residues 437–533 form the SH2 domain; that stretch reads WFHHRISRDE…VLPCKLKHYC (97 aa).

It belongs to the GRB7/10/14 family. In terms of assembly, interacts with the cytoplasmic domain of the autophosphorylated insulin receptor, through the SH2 domain. Interacts with GRB14 (via BPS domain); this interaction protects the tyrosines in the activation loop on INSR from dephosphorylation. Binds to the ankyrin repeat region of TNKS2 via its N-terminus. Interacts with activated NRAS. Interacts (via SH2 domain) with TEK/TIE2 (tyrosine phosphorylated). Phosphorylated on serine residues. Phosphorylated on tyrosine residues by TEK/TIE2.

The protein resides in the cytoplasm. It localises to the endosome membrane. Adapter protein which modulates coupling of cell surface receptor kinases with specific signaling pathways. Binds to, and suppresses signals from, the activated insulin receptor (INSR). Potent inhibitor of insulin-stimulated MAPK3 phosphorylation. Plays a critical role regulating PDPK1 membrane translocation in response to insulin stimulation and serves as an adapter protein to recruit PDPK1 to activated insulin receptor, thus promoting PKB/AKT1 phosphorylation and transduction of the insulin signal. The chain is Growth factor receptor-bound protein 14 (Grb14) from Mus musculus (Mouse).